Here is a 484-residue protein sequence, read N- to C-terminus: Probable cytochrome P450 555A1 (484 aa).

Residues 1–21 traverse the membrane as a helical segment; it reads MIIIVIVVFLFYFSFLNLNLN. C432 lines the heme pocket.

This sequence belongs to the cytochrome P450 family. The cofactor is heme.

It is found in the membrane. The polypeptide is Probable cytochrome P450 555A1 (cyp555A1) (Dictyostelium discoideum (Social amoeba)).